A 320-amino-acid polypeptide reads, in one-letter code: Methionyl-tRNA formyltransferase (320 aa).

111 to 114 (SLLP) serves as a coordination point for (6S)-5,6,7,8-tetrahydrofolate.

It belongs to the Fmt family.

The catalysed reaction is L-methionyl-tRNA(fMet) + (6R)-10-formyltetrahydrofolate = N-formyl-L-methionyl-tRNA(fMet) + (6S)-5,6,7,8-tetrahydrofolate + H(+). Functionally, attaches a formyl group to the free amino group of methionyl-tRNA(fMet). The formyl group appears to play a dual role in the initiator identity of N-formylmethionyl-tRNA by promoting its recognition by IF2 and preventing the misappropriation of this tRNA by the elongation apparatus. This is Methionyl-tRNA formyltransferase from Methylacidiphilum infernorum (isolate V4) (Methylokorus infernorum (strain V4)).